The primary structure comprises 99 residues: Large ribosomal subunit protein uL23 (99 aa).

The protein belongs to the universal ribosomal protein uL23 family. Part of the 50S ribosomal subunit. Contacts protein L29, and trigger factor when it is bound to the ribosome.

Its function is as follows. One of the early assembly proteins it binds 23S rRNA. One of the proteins that surrounds the polypeptide exit tunnel on the outside of the ribosome. Forms the main docking site for trigger factor binding to the ribosome. The chain is Large ribosomal subunit protein uL23 from Rhodopseudomonas palustris (strain HaA2).